Here is a 178-residue protein sequence, read N- to C-terminus: Nucleoside-triphosphatase THEP1 (178 aa).

Residues 7 to 14 and 102 to 109 each bind ATP; these read GEPGVGKT and VIIIDEIG.

The protein belongs to the THEP1 NTPase family. As to quaternary structure, monomer.

It catalyses the reaction a ribonucleoside 5'-triphosphate + H2O = a ribonucleoside 5'-diphosphate + phosphate + H(+). Its function is as follows. Has nucleotide phosphatase activity towards ATP, GTP, CTP, TTP and UTP. May hydrolyze nucleoside diphosphates with lower efficiency. Does not have kinase activity. This chain is Nucleoside-triphosphatase THEP1, found in Aquifex aeolicus (strain VF5).